The following is a 951-amino-acid chain: Coiled-coil and C2 domain-containing protein 1A (951 aa).

Disordered stretches follow at residues 80-139 (CMRD…LETT), 185-266 (AIDE…RQRD), 306-346 (VDLS…PPPR), and 437-491 (NQDE…TRAQ). A compositionally biased stretch (acidic residues) spans 84–104 (PDEDEEEGTDEDDLEADDDLL). Phosphothreonine occurs at positions 92, 204, and 206. A compositionally biased stretch (low complexity) spans 201–210 (PASTPTYSPA). Ser-208 is modified (phosphoserine; by CDK1). Residues Ser-253 and Ser-324 each carry the phosphoserine modification. Residues 311–333 (LPPPPDQLPPDPPSPPSQPPTPA) are compositionally biased toward pro residues. The stretch at 346–392 (RTLLEALEQRMERYQVAAAQAKSKGDQRKARMHERIVKQYQDAIRAH) forms a coiled coil. Ser-455 carries the post-translational modification Phosphoserine. Residues 475-488 (SAPTAKAPPKATST) show a composition bias toward low complexity. Residues 484-517 (KATSTRAQQQLAFLEGRKKQLLQAALRAKQKNDV) are a coiled coil. The C2 domain occupies 637–771 (RFEQRTFSVI…EIACEVREIL (135 aa)). The tract at residues 818–841 (TQVAGPKGKAPPVPAPARESGNRS) is disordered.

The protein belongs to the CC2D1 family. Post-translationally, phosphorylation on Ser-208 by CDK1 promotes spindle pole localization and association with SCC1/RAD21.

It localises to the cytoplasm. The protein resides in the nucleus. It is found in the cytoskeleton. Its subcellular location is the microtubule organizing center. The protein localises to the centrosome. Transcription factor that binds specifically to the DRE (dual repressor element) and represses HTR1A gene transcription in neuronal cells. The combination of calcium and ATP specifically inactivates the binding with FRE. May play a role in the altered regulation of HTR1A associated with anxiety and major depression. Mediates HDAC-independent repression of HTR1A promoter in neuronal cell. Performs essential function in controlling functional maturation of synapses. Plays distinct roles depending on its localization. When cytoplasmic, acts as a scaffold protein in the PI3K/PDK1/AKT pathway. Repressor of HTR1A when nuclear. In the centrosome, regulates spindle pole localization of the cohesin subunit SCC1/RAD21, thereby mediating centriole cohesion during mitosis. This chain is Coiled-coil and C2 domain-containing protein 1A (CC2D1A), found in Homo sapiens (Human).